The following is a 478-amino-acid chain: Lysosome membrane protein 2 (478 aa).

The Cytoplasmic segment spans residues methionine 1 to cysteine 4. The chain crosses the membrane as a helical span at residues cysteine 5 to arginine 27. Residues valine 28–leucine 433 are Lumenal-facing. N-linked (GlcNAc...) asparagine glycans are attached at residues asparagine 45, asparagine 68, and asparagine 105. An important for interaction with GBA1 region spans residues isoleucine 155–phenylalanine 191. N-linked (GlcNAc...) asparagine glycans are attached at residues asparagine 206, asparagine 224, asparagine 249, and asparagine 304. 2 disulfide bridges follow: cysteine 274-cysteine 329 and cysteine 312-cysteine 318. N-linked (GlcNAc...) asparagine glycans are attached at residues asparagine 325, asparagine 412, and asparagine 430. Residues isoleucine 434–lysine 459 form a helical membrane-spanning segment. Residues glycine 460–threonine 478 are Cytoplasmic-facing.

The protein belongs to the CD36 family. As to quaternary structure, interacts with GBA1. In terms of assembly, (Microbial infection) Interacts with enterovirus 71 capsid proteins VP1 and VP2.

It is found in the lysosome membrane. Its function is as follows. Acts as a lysosomal receptor for glucosylceramidase (GBA1) targeting. In terms of biological role, (Microbial infection) Acts as a receptor for enterovirus 71. The polypeptide is Lysosome membrane protein 2 (SCARB2) (Homo sapiens (Human)).